The chain runs to 175 residues: Large ribosomal subunit protein uL6 (175 aa).

The protein belongs to the universal ribosomal protein uL6 family. Part of the 50S ribosomal subunit.

Functionally, this protein binds to the 23S rRNA, and is important in its secondary structure. It is located near the subunit interface in the base of the L7/L12 stalk, and near the tRNA binding site of the peptidyltransferase center. The protein is Large ribosomal subunit protein uL6 of Xylella fastidiosa (strain 9a5c).